Consider the following 160-residue polypeptide: Succinate dehydrogenase assembly factor 2-B, mitochondrial (160 aa).

The N-terminal 23 residues, 1–23, are a transit peptide targeting the mitochondrion; the sequence is MLRQLKLTLNISRWIFMPWQRHA.

Belongs to the SDHAF2 family. As to quaternary structure, interacts with the flavoprotein subunit within the SDH catalytic dimer.

It is found in the mitochondrion matrix. In terms of biological role, plays an essential role in the assembly of succinate dehydrogenase (SDH), an enzyme complex (also referred to as respiratory complex II) that is a component of both the tricarboxylic acid (TCA) cycle and the mitochondrial electron transport chain, and which couples the oxidation of succinate to fumarate with the reduction of ubiquinone (coenzyme Q) to ubiquinol. Required for flavinylation (covalent attachment of FAD) of the flavoprotein subunit of the SDH catalytic dimer. This is Succinate dehydrogenase assembly factor 2-B, mitochondrial from Drosophila pseudoobscura pseudoobscura (Fruit fly).